The sequence spans 490 residues: Acetyl-coenzyme A carboxylase carboxyl transferase subunit beta, chloroplastic (490 aa).

A CoA carboxyltransferase N-terminal domain is found at 221 to 490 (LWVQCENCYG…PLNQKSSKIK (270 aa)). Cys225, Cys228, Cys244, and Cys247 together coordinate Zn(2+). Residues 225 to 247 (CENCYGLNYKKFLKSKMNICEQC) form a C4-type zinc finger.

The protein belongs to the AccD/PCCB family. Acetyl-CoA carboxylase is a heterohexamer composed of biotin carboxyl carrier protein, biotin carboxylase and 2 subunits each of ACCase subunit alpha and ACCase plastid-coded subunit beta (accD). Zn(2+) is required as a cofactor. Expressed in leaves, ripening and mature fruit.

The protein localises to the plastid. It is found in the chloroplast stroma. The protein resides in the chromoplast stroma. It catalyses the reaction N(6)-carboxybiotinyl-L-lysyl-[protein] + acetyl-CoA = N(6)-biotinyl-L-lysyl-[protein] + malonyl-CoA. Its pathway is lipid metabolism; malonyl-CoA biosynthesis; malonyl-CoA from acetyl-CoA: step 1/1. Its function is as follows. Component of the acetyl coenzyme A carboxylase (ACC) complex. Biotin carboxylase (BC) catalyzes the carboxylation of biotin on its carrier protein (BCCP) and then the CO(2) group is transferred by the transcarboxylase to acetyl-CoA to form malonyl-CoA. Is up-regulated upon chromoplast differentiation, presumably for fatty acid biosynthesis. The chain is Acetyl-coenzyme A carboxylase carboxyl transferase subunit beta, chloroplastic from Solanum lycopersicum (Tomato).